The primary structure comprises 584 residues: UvrABC system protein C (584 aa).

Residues 14–91 (HKPGCYLWKD…IKTHLPKYNI (78 aa)) enclose the GIY-YIG domain. Positions 192-227 (DHILMILQTKEQHAVTKLDFENAQKYAEQQKALTSI) constitute a UVR domain.

It belongs to the UvrC family. In terms of assembly, interacts with UvrB in an incision complex.

It is found in the cytoplasm. Functionally, the UvrABC repair system catalyzes the recognition and processing of DNA lesions. UvrC both incises the 5' and 3' sides of the lesion. The N-terminal half is responsible for the 3' incision and the C-terminal half is responsible for the 5' incision. The chain is UvrABC system protein C from Ureaplasma parvum serovar 3 (strain ATCC 27815 / 27 / NCTC 11736).